A 1155-amino-acid polypeptide reads, in one-letter code: PAN2-PAN3 deadenylation complex catalytic subunit pan2 (1155 aa).

WD repeat units follow at residues 102–145 (THED…DKLP) and 276–315 (ANVS…HFNE). Residues 316-452 (MSKEVEFADV…GTKLNGEAED (137 aa)) form a linker region. Positions 453–822 (DPLLKYSNVE…VPCVLAYQVK (370 aa)) constitute a USP domain. The Exonuclease domain occupies 871 to 1049 (VALDTEFVDL…IEDARMALRL (179 aa)). The a divalent metal cation site is built by Asp874, Glu876, Asp983, and Asp1042. The interval 1095–1155 (TAVTMQNNSG…GDFFGGSPLK (61 aa)) is disordered. Residues 1097–1106 (VTMQNNSGRN) show a composition bias toward polar residues. Positions 1107-1124 (TPSTPEVTAPTASAPTTP) are enriched in low complexity.

The protein belongs to the peptidase C19 family. PAN2 subfamily. As to quaternary structure, forms a heterotrimer with an asymmetric homodimer of the regulatory subunit pan3 to form the poly(A)-nuclease (PAN) deadenylation complex. It depends on a divalent metal cation as a cofactor.

The protein localises to the cytoplasm. It catalyses the reaction Exonucleolytic cleavage of poly(A) to 5'-AMP.. With respect to regulation, positively regulated by the regulatory subunit pan3. In terms of biological role, catalytic subunit of the poly(A)-nuclease (PAN) deadenylation complex, one of two cytoplasmic mRNA deadenylases involved in mRNA turnover. PAN specifically shortens poly(A) tails of RNA and the activity is stimulated by poly(A)-binding protein pab1. PAN deadenylation is followed by rapid degradation of the shortened mRNA tails by the CCR4-NOT complex. Deadenylated mRNAs are then degraded by two alternative mechanisms, namely exosome-mediated 3'-5' exonucleolytic degradation, or deadenylation-dependent mRNA decaping and subsequent 5'-3' exonucleolytic degradation by xrn1. May also be involved in post-transcriptional maturation of mRNA poly(A) tails. In Aspergillus oryzae (strain ATCC 42149 / RIB 40) (Yellow koji mold), this protein is PAN2-PAN3 deadenylation complex catalytic subunit pan2.